A 241-amino-acid chain; its full sequence is uncharacterized protein (241 aa).

Belongs to the AB hydrolase superfamily. AB hydrolase 2 family.

This is an uncharacterized protein from Schizosaccharomyces pombe (strain 972 / ATCC 24843) (Fission yeast).